A 146-amino-acid polypeptide reads, in one-letter code: Hemoglobin subunit beta (146 aa).

One can recognise a Globin domain in the interval 2 to 146 (QWTAEEKQLI…VAHALARKYH (145 aa)). Histidine 63 and histidine 92 together coordinate heme b.

Belongs to the globin family. In terms of assembly, heterotetramer of two alpha chains and two beta chains. Red blood cells.

Involved in oxygen transport from the lung to the various peripheral tissues. This chain is Hemoglobin subunit beta (HBB), found in Apus apus (Common swift).